We begin with the raw amino-acid sequence, 264 residues long: Thiazole synthase (264 aa).

Catalysis depends on lysine 106, which acts as the Schiff-base intermediate with DXP. 1-deoxy-D-xylulose 5-phosphate is bound by residues glycine 167, 193–194 (AG), and 215–216 (NT).

It belongs to the ThiG family. In terms of assembly, homotetramer. Forms heterodimers with either ThiH or ThiS.

The protein resides in the cytoplasm. The catalysed reaction is [ThiS sulfur-carrier protein]-C-terminal-Gly-aminoethanethioate + 2-iminoacetate + 1-deoxy-D-xylulose 5-phosphate = [ThiS sulfur-carrier protein]-C-terminal Gly-Gly + 2-[(2R,5Z)-2-carboxy-4-methylthiazol-5(2H)-ylidene]ethyl phosphate + 2 H2O + H(+). Its pathway is cofactor biosynthesis; thiamine diphosphate biosynthesis. Catalyzes the rearrangement of 1-deoxy-D-xylulose 5-phosphate (DXP) to produce the thiazole phosphate moiety of thiamine. Sulfur is provided by the thiocarboxylate moiety of the carrier protein ThiS. In vitro, sulfur can be provided by H(2)S. The polypeptide is Thiazole synthase (Xanthomonas oryzae pv. oryzae (strain MAFF 311018)).